The sequence spans 304 residues: Glyceraldehyde-3-phosphate dehydrogenase 2 (304 aa).

Residues 1–2, D22, and R67 contribute to the NAD(+) site; that span reads RI. Residues 138–140, T169, 198–199, and R221 contribute to the D-glyceraldehyde 3-phosphate site; these read SCT and TG. C139 functions as the Nucleophile in the catalytic mechanism. An NAD(+)-binding site is contributed by N303.

This sequence belongs to the glyceraldehyde-3-phosphate dehydrogenase family. In terms of assembly, homotetramer.

It is found in the cytoplasm. It carries out the reaction D-glyceraldehyde 3-phosphate + phosphate + NAD(+) = (2R)-3-phospho-glyceroyl phosphate + NADH + H(+). It participates in carbohydrate degradation; glycolysis; pyruvate from D-glyceraldehyde 3-phosphate: step 1/5. The polypeptide is Glyceraldehyde-3-phosphate dehydrogenase 2 (Gapdh2) (Drosophila subobscura (Fruit fly)).